Consider the following 405-residue polypeptide: uncharacterized protein (405 aa).

At 1 to 18 the chain is on the cytoplasmic side; it reads MPEPVAEPALNGLRLNLR. A helical transmembrane segment spans residues 19 to 39; that stretch reads IVSIVMFNFASYLTIGLPLAV. Residues 40–46 lie on the Periplasmic side of the membrane; sequence LPGYVHD. The helical transmembrane segment at 47–67 threads the bilayer; the sequence is VMGFSAFWAGLVISLQYFATL. Topologically, residues 68-84 are cytoplasmic; it reads LSRPHAGRYADSLGPKK. The helical transmembrane segment at 85–105 threads the bilayer; that stretch reads IVVFGLCGCFLSGLGYLTAGL. Position 106 (Thr-106) is a topological domain, periplasmic. Residues 107–127 form a helical membrane-spanning segment; that stretch reads ASLPVISLLLLCLGRVILGIG. Residues 128 to 155 are Cytoplasmic-facing; that stretch reads QSFAGTGSTLWGVGVVGSLHIGRVISWN. A helical membrane pass occupies residues 156-176; the sequence is GIVTYGAMAMGAPLGVVFYHW. Position 177 (Gly-177) is a topological domain, periplasmic. The chain crosses the membrane as a helical span at residues 178–198; it reads GLQALALIIMGVALVAILLAI. Topologically, residues 199–223 are cytoplasmic; sequence PRPTVKASKGKPLPFRAVLGRVWLY. The chain crosses the membrane as a helical span at residues 224–244; sequence GMALALASAGFGVIATFITLF. Residues 245–251 lie on the Periplasmic side of the membrane; that stretch reads YDAKGWD. Residues 252 to 272 traverse the membrane as a helical segment; that stretch reads GAAFALTLFSCAFVGTRLLFP. Residues 273–282 are Cytoplasmic-facing; that stretch reads NGINRIGGLN. Residues 283-303 form a helical membrane-spanning segment; sequence VAMICFSVEIIGLLLVGVATM. At 304–308 the chain is on the periplasmic side; it reads PWMAK. Residues 309-329 form a helical membrane-spanning segment; it reads IGVLLAGAGFSLVFPALGVVA. At 330–343 the chain is on the cytoplasmic side; sequence VKAVPQQNQGAALA. The helical transmembrane segment at 344–364 threads the bilayer; that stretch reads TYTVFMDLSLGVTGPLAGLVM. Position 365 (Ser-365) is a topological domain, periplasmic. Residues 366–386 traverse the membrane as a helical segment; the sequence is WAGVPVIYLAAAGLVAIALLL. Topologically, residues 387–405 are cytoplasmic; the sequence is TWRLKKRPPEHVPEAASSS.

This sequence belongs to the major facilitator superfamily. YhhS family.

The protein localises to the cell inner membrane. Confers high-level resistance to glyphosate when overexpressed. Overexpression has no effect on intracellular arabinose concentrations. This is an uncharacterized protein from Escherichia coli (strain K12).